Consider the following 437-residue polypeptide: GTPase Der (437 aa).

EngA-type G domains follow at residues 3-167 and 176-352; these read NLVA…KKES and PRFA…ENRM. GTP contacts are provided by residues 9–16, 56–60, 119–122, 182–189, 229–233, and 294–297; these read GRPNVGKS, DTGGW, NKTD, GRPNAGKS, DTAGI, and NKWD. In terms of domain architecture, KH-like spans 353 to 437; that stretch reads IKIPTARLNE…TPINIYIRQK (85 aa).

The protein belongs to the TRAFAC class TrmE-Era-EngA-EngB-Septin-like GTPase superfamily. EngA (Der) GTPase family. As to quaternary structure, associates with the 50S ribosomal subunit.

In terms of biological role, GTPase that plays an essential role in the late steps of ribosome biogenesis. This is GTPase Der from Bacteroides fragilis (strain ATCC 25285 / DSM 2151 / CCUG 4856 / JCM 11019 / LMG 10263 / NCTC 9343 / Onslow / VPI 2553 / EN-2).